Here is a 663-residue protein sequence, read N- to C-terminus: Guanine nucleotide exchange factor subunit RGP1 (663 aa).

A phosphoserine mark is found at serine 351, serine 354, serine 357, serine 363, serine 364, and serine 370. The segment at 412–443 (GKDEDSSDPEPNDSHFSNEMVTSAESSLRSDA) is disordered. The segment covering 426-440 (HFSNEMVTSAESSLR) has biased composition (polar residues).

It belongs to the RGP1 family. In terms of assembly, forms a complex with RIC1.

It localises to the golgi apparatus. The RIC1-RGP1 complex acts as a guanine nucleotide exchange factor (GEF), which activates YPT6 by exchanging bound GDP for free GTP. It is thereby required for efficient fusion of endosome-derived vesicles with the Golgi. The RIC1-RGP1 participates in the recycling of SNC1, presumably by mediating fusion of endosomal vesicles with the Golgi compartment. Functionally, required for proper mitotic growth. The protein is Guanine nucleotide exchange factor subunit RGP1 of Saccharomyces cerevisiae (strain ATCC 204508 / S288c) (Baker's yeast).